Reading from the N-terminus, the 363-residue chain is Protein-arginine kinase (363 aa).

In terms of domain architecture, Phosphagen kinase C-terminal spans 24–254; that stretch reads IVLSSRIRLA…AQLIEQERSA (231 aa). ATP contacts are provided by residues 27-31, His92, Arg125, 176-180, and 207-212; these read SSRIR, RASVM, and RGIYGE. The RDXXRA motif of the pArg binding pocket involved in allosteric regulation signature appears at 337-342; that stretch reads RDIKRA.

Belongs to the ATP:guanido phosphotransferase family.

It carries out the reaction L-arginyl-[protein] + ATP = N(omega)-phospho-L-arginyl-[protein] + ADP + H(+). Its activity is regulated as follows. Appears to be allosterically activated by the binding of pArg-containing polypeptides to the pArg-binding pocket localized in the C-terminal domain of McsB. Catalyzes the specific phosphorylation of arginine residues in a large number of proteins. Is part of the bacterial stress response system. Protein arginine phosphorylation has a physiologically important role and is involved in the regulation of many critical cellular processes, such as protein homeostasis, motility, competence, and stringent and stress responses, by regulating gene expression and protein activity. The polypeptide is Protein-arginine kinase (Bacillus pumilus (strain SAFR-032)).